The chain runs to 131 residues: MRHQKRTHKLGRDTQHRSALIANLAKELIEHKRIKTTLIKAKALRPFAEKLITLAKKGTLHARRLVVRKIHSKKAARLLFKEIAPQMQGRIGGYVRIYKMGNRLSDGAKMALIEWTEGQVPVENQKAQKAE.

It belongs to the bacterial ribosomal protein bL17 family. As to quaternary structure, part of the 50S ribosomal subunit. Contacts protein L32.

The polypeptide is Large ribosomal subunit protein bL17 (Methylacidiphilum infernorum (isolate V4) (Methylokorus infernorum (strain V4))).